The primary structure comprises 1198 residues: Spindle-defective protein 5 (1198 aa).

Polar residues predominate over residues 1–10 (MEDNSVLNED). Positions 1 to 45 (MEDNSVLNEDSNLEHVEGQPRRSMSQPVLNVEGDKRTSSTSATQQ) are disordered. Coiled coils occupy residues 67–381 (EENK…QLTG), 566–603 (HDVA…FEEI), 694–916 (KFTS…LSTS), 983–1035 (DELC…ENVP), and 1127–1175 (KNET…EFQD).

The protein resides in the cytoplasm. It localises to the cytoskeleton. Its subcellular location is the microtubule organizing center. The protein localises to the centrosome. Functionally, plays a central role in centrosome maturation and mitotic spindle assembly during the first division of the zygote. Required for the centrosomal localization of air-1 and zyg-9. Probably not required in late embryogenesis and during larval development. The sequence is that of Spindle-defective protein 5 (spd-5) from Caenorhabditis elegans.